Reading from the N-terminus, the 405-residue chain is Tyrosine--tRNA ligase (405 aa).

Residues 48–57 carry the 'HIGH' region motif; the sequence is PSRPDLHLGH. The 'KMSKS' region signature appears at 232-236; the sequence is KMSKS. An ATP-binding site is contributed by Lys235. Residues 339 to 400 form the S4 RNA-binding domain; sequence LPLVDLLTTL…AGKRKFFRIA (62 aa).

It belongs to the class-I aminoacyl-tRNA synthetase family. TyrS type 2 subfamily. In terms of assembly, homodimer.

It is found in the cytoplasm. The catalysed reaction is tRNA(Tyr) + L-tyrosine + ATP = L-tyrosyl-tRNA(Tyr) + AMP + diphosphate + H(+). Its function is as follows. Catalyzes the attachment of tyrosine to tRNA(Tyr) in a two-step reaction: tyrosine is first activated by ATP to form Tyr-AMP and then transferred to the acceptor end of tRNA(Tyr). This chain is Tyrosine--tRNA ligase, found in Chlorobium luteolum (strain DSM 273 / BCRC 81028 / 2530) (Pelodictyon luteolum).